Reading from the N-terminus, the 717-residue chain is Fatty acid oxidation complex subunit alpha (717 aa).

An enoyl-CoA hydratase/isomerase region spans residues 1-190 (MIHAGNAITV…KDGAVDAVVS (190 aa)). Residue Asp298 coordinates substrate. The interval 313–717 (HPVNQAAVLG…MAENNKKFYG (405 aa)) is 3-hydroxyacyl-CoA dehydrogenase. Residues Met326, Asp345, 402 to 404 (VTE), Lys409, and Ser431 each bind NAD(+). His452 acts as the For 3-hydroxyacyl-CoA dehydrogenase activity in catalysis. Asn455 contributes to the NAD(+) binding site. Asn502 is a binding site for substrate.

The protein in the N-terminal section; belongs to the enoyl-CoA hydratase/isomerase family. This sequence in the C-terminal section; belongs to the 3-hydroxyacyl-CoA dehydrogenase family. Heterotetramer of two alpha chains (FadB) and two beta chains (FadA).

The catalysed reaction is a (3S)-3-hydroxyacyl-CoA + NAD(+) = a 3-oxoacyl-CoA + NADH + H(+). It carries out the reaction a (3S)-3-hydroxyacyl-CoA = a (2E)-enoyl-CoA + H2O. It catalyses the reaction a 4-saturated-(3S)-3-hydroxyacyl-CoA = a (3E)-enoyl-CoA + H2O. The enzyme catalyses (3S)-3-hydroxybutanoyl-CoA = (3R)-3-hydroxybutanoyl-CoA. The catalysed reaction is a (3Z)-enoyl-CoA = a 4-saturated (2E)-enoyl-CoA. It carries out the reaction a (3E)-enoyl-CoA = a 4-saturated (2E)-enoyl-CoA. Its pathway is lipid metabolism; fatty acid beta-oxidation. Functionally, involved in the aerobic and anaerobic degradation of long-chain fatty acids via beta-oxidation cycle. Catalyzes the formation of 3-oxoacyl-CoA from enoyl-CoA via L-3-hydroxyacyl-CoA. It can also use D-3-hydroxyacyl-CoA and cis-3-enoyl-CoA as substrate. This is Fatty acid oxidation complex subunit alpha from Acinetobacter baylyi (strain ATCC 33305 / BD413 / ADP1).